A 350-amino-acid chain; its full sequence is UDP-glucose 4-epimerase (350 aa).

Position 7–38 (7–38) interacts with NAD(+); that stretch reads KILVTGSAGFIGTHTVVQLLNNGFNVSIIDNF. S133 lines the substrate pocket. Y157 serves as the catalytic Proton acceptor.

The protein belongs to the NAD(P)-dependent epimerase/dehydratase family. It depends on NAD(+) as a cofactor.

The enzyme catalyses UDP-alpha-D-glucose = UDP-alpha-D-galactose. The protein operates within carbohydrate metabolism; galactose metabolism. The sequence is that of UDP-glucose 4-epimerase (GALE) from Pisum sativum (Garden pea).